The following is a 336-amino-acid chain: MAHVAEWKKKEVQELHDLIKGYEVVGIANLADIPARQLQKMRQTLRDSALIRMSKKTLISLALEKAGRELENVDSLSDYMEGQPALIFTDMNPFKLFKILEDSKTPAPAKPGAIAPDDIVVPKGDTGFAPGPILGELQQIGIPAKIEKGKIVVSNDHVVVKAGEEIPPKVAGILTRLDIQPLEVGIDLRAAYENQTVYTADVLTIDEEKTLSDIQKAFSQAFNLSVNAVIYTRETMPAIIQKAASKSFNLAYNASILTSETTDLLLAKAYAQMLALAAAAAEINDEAVDDELKEKLSSRAAAPAPEEKEEEVEEEAEEEEEEEEEDAAAGLGALFG.

Residues leucine 292–glycine 336 are disordered. The span at glutamate 307–alanine 327 shows a compositional bias: acidic residues.

This sequence belongs to the universal ribosomal protein uL10 family. As to quaternary structure, part of the 50S ribosomal subunit. Forms part of the ribosomal stalk which helps the ribosome interact with GTP-bound translation factors. Forms a heptameric L10(L12)2(L12)2(L12)2 complex, where L10 forms an elongated spine to which the L12 dimers bind in a sequential fashion.

In terms of biological role, forms part of the ribosomal stalk, playing a central role in the interaction of the ribosome with GTP-bound translation factors. The polypeptide is Large ribosomal subunit protein uL10 (Methanothermobacter thermautotrophicus (strain ATCC 29096 / DSM 1053 / JCM 10044 / NBRC 100330 / Delta H) (Methanobacterium thermoautotrophicum)).